Here is a 380-residue protein sequence, read N- to C-terminus: 12-oxophytodienoate reductase 1 (380 aa).

Residues 35–37 (PLT), Ala68, and Gln110 contribute to the FMN site. 182-185 (HGAH) contributes to the substrate binding site. Tyr187 acts as the Proton donor in catalysis. Arg234 is an FMN binding site. A substrate-binding site is contributed by Arg275. FMN is bound by residues Gly305 and 326–327 (GR).

This sequence belongs to the NADH:flavin oxidoreductase/NADH oxidase family. FMN serves as cofactor.

It catalyses the reaction (1S,2S)-OPC-8 + NADP(+) = (9S,13S,15Z)-12-oxophyto-10,15-dienoate + NADPH + H(+). The protein operates within lipid metabolism; oxylipin biosynthesis. In terms of biological role, probably involved in the biosynthesis or metabolism of oxylipin signaling molecules. In vitro, reduces cis(-)-12-oxophytodienoic acid (cis(-)-OPDA) and to cis(-)-OPC-8:0. This chain is 12-oxophytodienoate reductase 1, found in Oryza sativa subsp. japonica (Rice).